The following is a 2671-amino-acid chain: Inositol 1,4,5-trisphosphate-gated calcium channel ITPR3 (2671 aa).

Over 1–2202 (MSEMSSFLHI…LIYWFSRRMT (2202 aa)) the chain is Cytoplasmic. 5 MIR domains span residues 113–173 (GDVV…LRSN), 174–224 (GDNV…INLF), 232–288 (EEVL…VEVV), 295–372 (GGAG…LDPT), and 378–434 (DSFV…IVSV). 1D-myo-inositol 1,4,5-trisphosphate contacts are provided by Arg266, Thr268, Leu269, and Arg270. Residues 322–342 (SYKGDASDPKAAGMGAQGRTG) are disordered. Residues Arg503, Lys507, Arg510, Tyr567, Arg568, and Lys569 each coordinate 1D-myo-inositol 1,4,5-trisphosphate. A Ca(2+)-binding site is contributed by Arg743. Phosphoserine is present on residues Ser916 and Ser934. Ca(2+) is bound by residues Glu1122 and Glu1125. 2 disordered regions span residues 1132 to 1163 (GSGK…PPGE) and 1809 to 1848 (NDLG…GPSL). Phosphoserine occurs at positions 1813, 1832, and 1834. Ca(2+) is bound by residues Glu1882 and Glu1946. ATP contacts are provided by Ala1996, Glu2149, and Lys2152. Residues 2203-2223 (LWGSISFNLAVFINIIIAFFY) traverse the membrane as a helical segment. Over 2224–2235 (PYMEGASTGVLD) the chain is Extracellular. Residues 2236 to 2256 (SPLISLLFWILICFSIAALFT) traverse the membrane as a helical segment. Residues 2257–2264 (KRYSIRPL) lie on the Cytoplasmic side of the membrane. The chain crosses the membrane as a helical span at residues 2265-2285 (IVALILRSIYYLGIGPTLNIL). Residues 2286 to 2325 (GALNLTNKIVFVVSFVGNRGTFIRGYKAMVMDMEFLYHVG) are Extracellular-facing. The chain crosses the membrane as a helical span at residues 2326-2346 (YILTSVLGLFAHELFYSILLF). The Cytoplasmic segment spans residues 2347–2368 (DLIYREETLFNVIKSVTRNGRS). The helical transmembrane segment at 2369–2389 (ILLTALLALILVYLFSIVGFL) threads the bilayer. Residues 2390–2496 (FLKDDFILEV…ESLFPARVVY (107 aa)) are Extracellular-facing. An intrachain disulfide couples Cys2455 to Cys2461. Residues 2497 to 2517 (DLLFFFIVIIIVLNLIFGVII) form a helical membrane-spanning segment. Residues 2518–2671 (DTFADLRSEK…FVDVQNCISR (154 aa)) are Cytoplasmic-facing. 2 residues coordinate ATP: Cys2538 and Phe2539. Residue Cys2538 participates in Zn(2+) binding. Zn(2+)-binding residues include Cys2541 and His2558. Positions 2560, 2563, 2564, and 2565 each coordinate ATP. A Zn(2+)-binding site is contributed by His2563. Thr2581 is a Ca(2+) binding site. A phosphoserine mark is found at Ser2609 and Ser2670.

This sequence belongs to the InsP3 receptor family. As to quaternary structure, homotetramer. Homodimer. Interacts with TRPC1, TRPC3 and TRPC4. Interacts with TRPV4. Interacts with SIGMAR1. Interacts with PML and AKT1. Interacts with IRAG2 (via coiled-coil domain). Interacts with CABP1. Interacts with TMBIM4/LFG4. Interacts with CEMIP. Interacts with TESPA1. Interacts with TMEM203. Interacts with BOK; regulates ITPR3 expression. Interacts with BCL2L10. Interacts with CHGA and CHGB. Phosphorylated by AKT1 on serine and/or threonine residues. As to expression, expressed in intestinal crypt and villus epithelial cells.

The protein resides in the endoplasmic reticulum membrane. Its subcellular location is the cytoplasmic vesicle. It localises to the secretory vesicle membrane. It carries out the reaction Ca(2+)(in) = Ca(2+)(out). Inositol 1,4,5-trisphosphate-gated calcium channel is regulated by cytosolic calcium in a biphasic manner. At low concentrations, cytosolic calcium binds at a high-affinity juxtamembrane domain (JD) calcium binding site, allowing ITPR3 to activate by escaping a low-energy resting state through an ensemble of preactivated states. At high cytosolic calcium concentrations, ITPR3 preferentially enters an inhibited state stabilized by calcium binding at a second, low-affinity cytoplasmic domain (CD) calcium binding site. Functionally, inositol 1,4,5-trisphosphate-gated calcium channel that, upon 1D-myo-inositol 1,4,5-trisphosphate binding, transports calcium from the endoplasmic reticulum lumen to cytoplasm, thus releasing the intracellular calcium and therefore participates in cellular calcium ion homeostasis. 1D-myo-inositol 1,4,5-trisphosphate binds to the ligand-free channel without altering its global conformation, yielding the low-energy resting state, then progresses through resting-to preactivated transitions to the higher energy preactivated state, which increases affinity for calcium, promoting binding of the low basal cytosolic calcium at the juxtamembrane domain (JD) site, favoring the transition through the ensemble of high-energy intermediate states along the trajectory to the fully-open activated state. Upon opening, releases calcium in the cytosol where it can bind to the low-affinity cytoplasmic domain (CD) site and stabilizes the inhibited state to terminate calcium release. This chain is Inositol 1,4,5-trisphosphate-gated calcium channel ITPR3, found in Homo sapiens (Human).